The following is a 99-amino-acid chain: High mobility group protein I (99 aa).

The tract at residues 1-99 (MSDSPVKKGR…ADTEEVNSSD (99 aa)) is disordered. A Phosphoserine; by CDC2 and MAPK modification is found at Ser4. A DNA-binding region (a.T hook 1) is located at residues 7 to 19 (KKGRGRPAKAKPE). Over residues 16–46 (AKPEETASPKAAKKEEKKVEEVPKKIEESTK) the composition is skewed to basic and acidic residues. Ser23 carries the post-translational modification Phosphoserine; by MAPK. A DNA-binding region (a.T hook 2) is located at residues 54-66 (KKGRGRPSKGDKA). At Ser73 the chain carries Phosphoserine; by PKC. Residues 74-86 (GKGRGRPAKNAKK) constitute a DNA-binding region (a.T hook 3). Residues 90–99 (ADTEEVNSSD) are compositionally biased toward acidic residues.

It belongs to the HMGA family. In terms of processing, phosphorylated in a cell-cycle dependent manner; substantially reduced in cells that have finished proliferating and are differentiated. Phosphorylation at Ser-4 and Ser-23 results in a 10-fold weakening of DNA-binding activity and altered the mode of protein-DNA interaction.

It is found in the nucleus. The protein localises to the nucleolus. Its subcellular location is the chromosome. Functionally, binds preferentially to the minor groove of A+T rich regions in double-stranded DNA via the second and third DBA-binding domains. It is suggested that these proteins could function in nucleosome phasing and in the 3'-end processing of mRNA transcripts. They are also involved in the transcription regulation of genes containing, or in close proximity to A+T-rich regions. The chain is High mobility group protein I from Chironomus tentans (Midge).